Consider the following 327-residue polypeptide: Biotin synthase (327 aa).

The 227-residue stretch at 42-268 (NKVQKASLLS…VMPASTVRLS (227 aa)) folds into the Radical SAM core domain. Residues C57, C61, and C64 each contribute to the [4Fe-4S] cluster site. Residues C102, C134, C194, and R266 each contribute to the [2Fe-2S] cluster site.

Belongs to the radical SAM superfamily. Biotin synthase family. Homodimer. [4Fe-4S] cluster is required as a cofactor. It depends on [2Fe-2S] cluster as a cofactor.

It carries out the reaction (4R,5S)-dethiobiotin + (sulfur carrier)-SH + 2 reduced [2Fe-2S]-[ferredoxin] + 2 S-adenosyl-L-methionine = (sulfur carrier)-H + biotin + 2 5'-deoxyadenosine + 2 L-methionine + 2 oxidized [2Fe-2S]-[ferredoxin]. It participates in cofactor biosynthesis; biotin biosynthesis; biotin from 7,8-diaminononanoate: step 2/2. In terms of biological role, catalyzes the conversion of dethiobiotin (DTB) to biotin by the insertion of a sulfur atom into dethiobiotin via a radical-based mechanism. This chain is Biotin synthase, found in Rhizobium rhizogenes (strain K84 / ATCC BAA-868) (Agrobacterium radiobacter).